A 159-amino-acid polypeptide reads, in one-letter code: Large ribosomal subunit protein uL11 (159 aa).

This sequence belongs to the universal ribosomal protein uL11 family. As to quaternary structure, part of the ribosomal stalk of the 50S ribosomal subunit. Interacts with L10 and the large rRNA to form the base of the stalk. L10 forms an elongated spine to which L12 dimers bind in a sequential fashion forming a multimeric L10(L12)X complex.

Its function is as follows. Forms part of the ribosomal stalk which helps the ribosome interact with GTP-bound translation factors. This chain is Large ribosomal subunit protein uL11, found in Methanococcus maripaludis (strain C6 / ATCC BAA-1332).